The following is a 415-amino-acid chain: Multidrug resistance protein MdtA (415 aa).

A signal peptide spans 1–21 (MKGSYKSRWVIVIVVVIAAIA). 2 disordered regions span residues 32–60 (SRSA…GPLA) and 392–415 (EAQS…GARS). Residues 399–415 (PEEKATSREYAKKGARS) are compositionally biased toward basic and acidic residues.

Belongs to the membrane fusion protein (MFP) (TC 8.A.1) family. As to quaternary structure, part of a tripartite efflux system composed of MdtA, MdtB and MdtC.

It is found in the cell inner membrane. The MdtABC tripartite complex confers resistance against novobiocin and deoxycholate. This is Multidrug resistance protein MdtA from Escherichia coli O81 (strain ED1a).